The chain runs to 570 residues: Putative ABC transporter ATP-binding protein MW2603 (570 aa).

ABC transporter domains lie at 6–247 (ISFK…GIRE) and 304–537 (LELN…ASLR). Residues 40-47 (GASGSGKS) and 338-345 (GHNGAGKS) contribute to the ATP site.

Belongs to the ABC transporter superfamily.

The protein localises to the cell membrane. Probably part of an ABC transporter complex. Responsible for energy coupling to the transport system. The sequence is that of Putative ABC transporter ATP-binding protein MW2603 from Staphylococcus aureus (strain MW2).